The chain runs to 133 residues: Transcription antitermination protein NusB (133 aa).

The protein belongs to the NusB family.

Its function is as follows. Involved in transcription antitermination. Required for transcription of ribosomal RNA (rRNA) genes. Binds specifically to the boxA antiterminator sequence of the ribosomal RNA (rrn) operons. The protein is Transcription antitermination protein NusB of Clostridium novyi (strain NT).